Reading from the N-terminus, the 137-residue chain is Large ribosomal subunit protein uL22 (137 aa).

It belongs to the universal ribosomal protein uL22 family. In terms of assembly, part of the 50S ribosomal subunit.

In terms of biological role, this protein binds specifically to 23S rRNA; its binding is stimulated by other ribosomal proteins, e.g. L4, L17, and L20. It is important during the early stages of 50S assembly. It makes multiple contacts with different domains of the 23S rRNA in the assembled 50S subunit and ribosome. Its function is as follows. The globular domain of the protein is located near the polypeptide exit tunnel on the outside of the subunit, while an extended beta-hairpin is found that lines the wall of the exit tunnel in the center of the 70S ribosome. This chain is Large ribosomal subunit protein uL22, found in Flavobacterium johnsoniae (strain ATCC 17061 / DSM 2064 / JCM 8514 / BCRC 14874 / CCUG 350202 / NBRC 14942 / NCIMB 11054 / UW101) (Cytophaga johnsonae).